Here is a 112-residue protein sequence, read N- to C-terminus: MGAECCKQLCRSLHPYAADSLKDSSGRRVDLGTEFSVLTDTSDDEDQVGAGERDDFVQKQLTTPLLSDKNSAIPLTVVTPIQLGANKGGGKRTSSLKSAKNGAGVKKKVRAL.

A lipid anchor (N-myristoyl glycine; by host) is attached at Gly2. A disordered region spans residues 84–112 (GANKGGGKRTSSLKSAKNGAGVKKKVRAL).

It belongs to the herpesviridae cytoplasmic envelopment protein 3 family. As to quaternary structure, interacts with cytoplasmic envelopment protein 2; this interaction is essential for the proper localization of each protein to the assembly complex and thus for the production of infectious virus. Post-translationally, myristoylation and palmitoylation (probably on one or more of the nearby cysteines at the N-terminus) enable membrane-binding and Golgi apparatus-specific targeting and are essential for efficient packaging. In terms of processing, phosphorylated. Phosphorylation does not seem to be required for recycling to the host Golgi apparatus. Packaging is selective for underphosphorylated forms.

It localises to the virion tegument. The protein localises to the virion membrane. It is found in the host cell membrane. The protein resides in the host Golgi apparatus membrane. Its function is as follows. Plays an important role in the cytoplasmic envelopment of tegument proteins and capsids during the assembly and egress processes. Also participates in viral entry at the fusion step probably by regulating the core fusion machinery. This chain is Cytoplasmic envelopment protein 3 (UL99), found in Murid herpesvirus 1 (strain K181) (MuHV-1).